The primary structure comprises 432 residues: Nuclear pore complex-interacting protein family member B9 (432 aa).

Disordered regions lie at residues 260–280 and 353–420; these read RMGR…NSLS and SPLP…LRTR. The segment covering 270–280 has biased composition (polar residues); sequence QQHSITDNSLS. The segment covering 374–402 has biased composition (basic and acidic residues); the sequence is EVEKPPKPKRWRVDEVEQSPKPKRQREAE. Positions 408-420 are enriched in basic residues; sequence KPKRRRLSKLRTR.

Belongs to the NPIP family.

This chain is Nuclear pore complex-interacting protein family member B9 (NPIPB9), found in Homo sapiens (Human).